A 168-amino-acid polypeptide reads, in one-letter code: Endoribonuclease YbeY (168 aa).

Residues histidine 126, histidine 130, and histidine 136 each coordinate Zn(2+).

This sequence belongs to the endoribonuclease YbeY family. Zn(2+) serves as cofactor.

The protein resides in the cytoplasm. Single strand-specific metallo-endoribonuclease involved in late-stage 70S ribosome quality control and in maturation of the 3' terminus of the 16S rRNA. This is Endoribonuclease YbeY from Agrobacterium fabrum (strain C58 / ATCC 33970) (Agrobacterium tumefaciens (strain C58)).